The sequence spans 633 residues: Basic helix-loop-helix ARNT-like protein 1 (633 aa).

The disordered stretch occupies residues 1–65; that stretch reads MADQRMDISS…GMDTDKDDQH (65 aa). At serine 17 the chain carries Phosphoserine; by GSK3-beta. A compositionally biased stretch (polar residues) spans 24-33; it reads ISSSLSTSGV. The short motif at 36-41 is the Nuclear localization signal element; sequence NRKRKG. One can recognise a bHLH domain in the interval 79–132; the sequence is NAREAHSQIEKRRRDKMNSFIDELASLVPTCNAMSRKLDKLTVLRMAVQHMKTL. Serine 85 is subject to Phosphoserine. Serine 97 is modified (phosphoserine; by CK2). A Nuclear export signal 1 motif is present at residues 149–159; the sequence is LSDDELKHLIL. One can recognise a PAS 1 domain in the interval 150–222; the sequence is SDDELKHLIL…EQLSSSDTAP (73 aa). Lysine 259 is covalently cross-linked (Glycyl lysine isopeptide (Lys-Gly) (interchain with G-Cter in SUMO2 and SUMO3)). Lysine 266 is covalently cross-linked (Glycyl lysine isopeptide (Lys-Gly) (interchain with G-Cter in SUMO)). The region spanning 333-403 is the PAS 2 domain; sequence PQPVNGEIRV…ECHRQVLQTR (71 aa). A Nuclear export signal 2 motif is present at residues 368–376; it reads LAYLPQELL. In terms of domain architecture, PAC spans 408-451; sequence TNCYKFKIKDGSFITLRSRWFSFMNPWTKEVEYIVSTNTVVSTS. 2 disordered regions span residues 469–499 and 518–578; these read SMDS…RAGA and GSSP…DNSS. Low complexity predominate over residues 518-528; the sequence is GSSPSSCGSSP. Residue lysine 545 is modified to N6-acetyllysine. A compositionally biased stretch (polar residues) spans 563-578; that stretch reads GQIQDSSGYPYSDNSS.

As to quaternary structure, component of the circadian clock oscillator which includes the CRY1/2 proteins, CLOCK or NPAS2, BMAL1 or BMAL2, CSNK1D and/or CSNK1E, TIMELESS and the PER1/2/3 proteins. Forms a heterodimer with CLOCK. The CLOCK-BMAL1 heterodimer is required for E-box-dependent transactivation, for CLOCK nuclear translocation and degradation, and, for phosphorylation of both CLOCK and BMAL1. Interacts with PER1, PER2, CRY1 and CRY2 and this interaction requires a translocation to the nucleus. Interaction of the CLOCK-BMAL1 heterodimer with PER or CRY inhibits transcription activation. Interacts with NPAS2. In terms of processing, ubiquitinated, leading to its proteasomal degradation. Deubiquitinated by USP9X. Post-translationally, O-glycosylated; contains O-GlcNAc. O-glycosylation by OGT prevents protein degradation by inhibiting ubiquitination. It also stabilizes the CLOCK-BMAL1 heterodimer thereby increasing CLOCK-BMAL1-mediated transcription of genes in the negative loop of the circadian clock such as PER1/2/3 and CRY1/2. Acetylated on Lys-545 by CLOCK during the repression phase of the circadian cycle. Acetylation facilitates recruitment of CRY1 protein and initiates the repression phase of the circadian cycle. Acetylated at Lys-545 by KAT5 during the activation phase of the cycle, leading to recruitment of the positive transcription elongation factor b (P-TEFb) and BRD4, followed by productive elongation of circadian transcripts. Deacetylated by SIRT1, which may result in decreased protein stability. In terms of processing, phosphorylated upon dimerization with CLOCK. Phosphorylation enhances the transcriptional activity, alters the subcellular localization and decreases the stability of the CLOCK-BMAL1 heterodimer by promoting its degradation. Phosphorylation shows circadian variations in the liver with a peak between CT10 to CT14. Phosphorylation at Ser-97 by CK2 is essential for its nuclear localization, its interaction with CLOCK and controls CLOCK nuclear entry. Dephosphorylation at Ser-85 is important for dimerization with CLOCK and transcriptional activity. Post-translationally, sumoylated on Lys-266 upon dimerization with CLOCK. Predominantly conjugated to poly-SUMO2/3 rather than SUMO1 and the level of these conjugates undergo rhythmic variation, peaking at CT9-CT12. Sumoylation localizes it exclusively to the PML body and promotes its ubiquitination in the PML body, ubiquitin-dependent proteasomal degradation and the transcriptional activity of the CLOCK-BMAL1 heterodimer. Undergoes lysosome-mediated degradation in a time-dependent manner in the liver. Expressed in pineal gland and retina.

Its subcellular location is the nucleus. It localises to the cytoplasm. It is found in the PML body. Transcriptional activator which forms a core component of the circadian clock. The circadian clock, an internal time-keeping system, regulates various physiological processes through the generation of approximately 24 hour circadian rhythms in gene expression, which are translated into rhythms in metabolism and behavior. It is derived from the Latin roots 'circa' (about) and 'diem' (day) and acts as an important regulator of a wide array of physiological functions including metabolism, sleep, body temperature, blood pressure, endocrine, immune, cardiovascular, and renal function. Consists of two major components: the central clock, residing in the suprachiasmatic nucleus (SCN) of the brain, and the peripheral clocks that are present in nearly every tissue and organ system. Both the central and peripheral clocks can be reset by environmental cues, also known as Zeitgebers (German for 'timegivers'). The predominant Zeitgeber for the central clock is light, which is sensed by retina and signals directly to the SCN. The central clock entrains the peripheral clocks through neuronal and hormonal signals, body temperature and feeding-related cues, aligning all clocks with the external light/dark cycle. Circadian rhythms allow an organism to achieve temporal homeostasis with its environment at the molecular level by regulating gene expression to create a peak of protein expression once every 24 hours to control when a particular physiological process is most active with respect to the solar day. Transcription and translation of core clock components (CLOCK, NPAS2, BMAL1, BMAL2, PER1, PER2, PER3, CRY1 and CRY2) plays a critical role in rhythm generation, whereas delays imposed by post-translational modifications (PTMs) are important for determining the period (tau) of the rhythms (tau refers to the period of a rhythm and is the length, in time, of one complete cycle). A diurnal rhythm is synchronized with the day/night cycle, while the ultradian and infradian rhythms have a period shorter and longer than 24 hours, respectively. Disruptions in the circadian rhythms contribute to the pathology of cardiovascular diseases, cancer, metabolic syndromes and aging. A transcription/translation feedback loop (TTFL) forms the core of the molecular circadian clock mechanism. Transcription factors, CLOCK or NPAS2 and BMAL1 or BMAL2, form the positive limb of the feedback loop, act in the form of a heterodimer and activate the transcription of core clock genes and clock-controlled genes (involved in key metabolic processes), harboring E-box elements (5'-CACGTG-3') within their promoters. The core clock genes: PER1/2/3 and CRY1/2 which are transcriptional repressors form the negative limb of the feedback loop and interact with the CLOCK|NPAS2-BMAL1|BMAL2 heterodimer inhibiting its activity and thereby negatively regulating their own expression. This heterodimer also activates nuclear receptors NR1D1/2 and RORA/B/G, which form a second feedback loop and which activate and repress BMAL1 transcription, respectively. The preferred binding motif for the CLOCK-BMAL1 heterodimer is 5'-CACGTGA-3', which contains a flanking adenine nucleotide at the 3-prime end of the canonical 6-nucleotide E-box sequence. CLOCK specifically binds to the half-site 5'-CAC-3', while BMAL1 binds to the half-site 5'-GTGA-3'. Essential for the rhythmic interaction of CLOCK with ASS1 and plays a critical role in positively regulating CLOCK-mediated acetylation of ASS1. Plays a role in protecting against lethal sepsis by limiting the expression of immune checkpoint protein CD274 in macrophages in a PKM2-dependent manner. The chain is Basic helix-loop-helix ARNT-like protein 1 (BMAL1) from Gallus gallus (Chicken).